A 501-amino-acid polypeptide reads, in one-letter code: Endosomal/lysosomal proton channel TMEM175 (501 aa).

A disordered region spans residues 1–20 (MAAPRAATPGPGGGARKPEL). Residues 1-31 (MAAPRAATPGPGGGARKPELDLELGSSTQTS) are Cytoplasmic-facing. The helical transmembrane segment at 32–54 (HRLLAYSDALLSIIATVMILPVA) threads the bilayer. The RxxxFSD motif 1 motif lies at 33–39 (RLLAYSD). Residues 55-75 (HTKIHPDQKLGESVQQLLLTK) lie on the Lumenal side of the membrane. Residues 56–61 (TKIHPD) form a short helix H1-1 region. The short helix H2-1 stretch occupies residues 63–69 (KLGESVQ). A helical membrane pass occupies residues 76–98 (IAVYLMTFLIVTVAWAAHVRLFQ). Over 99–104 (VIELID) the chain is Cytoplasmic. A helical membrane pass occupies residues 105 to 126 (DVLALLNLACMMIITFLPYTFS). The Lumenal portion of the chain corresponds to 127–136 (LMASFPGVPF). Residues 137 to 158 (GIFLFSVCAVVIGLIQAVIVVY) form a helical membrane-spanning segment. Topologically, residues 159–182 (GFYHPHLLNQQIQVSENQNFYKRH) are cytoplasmic. A helical membrane pass occupies residues 183 to 203 (ILKIILRGPALCFLAAIFSFF). Topologically, residues 204 to 208 (FIPLS) are lumenal. Residues 209 to 228 (YLLLGLVIVFPHLSRFITWC) traverse the membrane as a helical segment. Residues 229-257 (KTKIVGHRDEEEASYSLETFSFYLSEPLS) are Cytoplasmic-facing. Residues 258-282 (KERVEAFSDGVYAIVATLLILDICE) form a helical membrane-spanning segment. A RxxxFSD motif 2 motif is present at residues 260–266 (RVEAFSD). Over 283 to 309 (DNVPDPREVGEKFHGSLLEALSEYGPN) the chain is Lumenal. The segment at 288 to 296 (PREVGEKFH) is short helix H1-2. Residues 298–304 (SLLEALS) form a short helix H2-2 region. Residues 310 to 332 (YLAYFGSFVTIGLLWFVHHSLFL) form a helical membrane-spanning segment. Residues 333–338 (YVTKAT) are Cytoplasmic-facing. The chain crosses the membrane as a helical span at residues 339-360 (RLMGLLNILSLAFIGGLPLAYQ). At 361 to 375 (LTSEFAEKSHNEIEA) the chain is on the lumenal side. Residues 376–396 (IQVSCVITFFASIFQFAIWTT) traverse the membrane as a helical segment. Residues 397 to 416 (ALLHERETLHPFARYGGKEH) are Cytoplasmic-facing. The helical transmembrane segment at 417-440 (AFMFAKLALYPCVSLGAFFLTCLL) threads the bilayer. Residues 441–442 (SE) are Lumenal-facing. Residues 443–469 (FSTEIFHLMQIVIPFAFLALRIFVRIS) traverse the membrane as a helical segment. At 470-501 (LTVIKSVMSLSRRKVVLLEEEEACLSPTETHS) the chain is on the cytoplasmic side.

The protein belongs to the TMEM175 family. Homodimer.

The protein resides in the endosome membrane. The protein localises to the lysosome membrane. It catalyses the reaction H(+)(in) = H(+)(out). It carries out the reaction K(+)(in) = K(+)(out). With respect to regulation, active at low pH (under pH 4.6): proton channel activity is activated by luminal side protons. Polyunsaturated fatty acids, such as arachidonic acid, also activate the channel activity. Proton-activated proton channel that catalyzes proton efflux from endosomes and lysosomes to maintain a steady-state pH. Activated at low pH (under pH 4.6) by luminal side protons: selectively mediates lysosomal proton release from lysosomes, eliciting a proton leak that balances V-ATPase activity to maintain pH homeostasis. Regulation of lumenal pH stability is required for autophagosome-lysosome fusion. Also acts as a potassium channel at higher pH, regulating potassium conductance in endosomes and lysosomes. This Gallus gallus (Chicken) protein is Endosomal/lysosomal proton channel TMEM175.